The primary structure comprises 277 residues: Insertion element IS407 uncharacterized 31.7 kDa protein (277 aa).

Residues 103–264 (LPGAPNEVWS…APSEFAAKHR (162 aa)) enclose the Integrase catalytic domain.

The sequence is that of Insertion element IS407 uncharacterized 31.7 kDa protein from Burkholderia multivorans (strain ATCC 17616 / 249).